The chain runs to 878 residues: DNA gyrase subunit A (878 aa).

The region spanning 34–533 is the Topo IIA-type catalytic domain; it reads LPDVRDGLKP…NSADINIEDL (500 aa). Y122 functions as the O-(5'-phospho-DNA)-tyrosine intermediate in the catalytic mechanism. Positions 560 to 566 match the GyrA-box motif; that stretch reads QRRGGKG. The disordered stretch occupies residues 844-878; the sequence is DDEELDAIDGSVAEGDEDIAPEAESDDDVADDADE. Residues 857-878 show a composition bias toward acidic residues; the sequence is EGDEDIAPEAESDDDVADDADE.

The protein belongs to the type II topoisomerase GyrA/ParC subunit family. In terms of assembly, heterotetramer, composed of two GyrA and two GyrB chains. In the heterotetramer, GyrA contains the active site tyrosine that forms a transient covalent intermediate with DNA, while GyrB binds cofactors and catalyzes ATP hydrolysis.

The protein resides in the cytoplasm. The catalysed reaction is ATP-dependent breakage, passage and rejoining of double-stranded DNA.. Its function is as follows. A type II topoisomerase that negatively supercoils closed circular double-stranded (ds) DNA in an ATP-dependent manner to modulate DNA topology and maintain chromosomes in an underwound state, and also catalyzes the interconversion of other topological isomers of double-stranded DNA rings, including catenanes and knotted rings. Replenishes negative supercoiling downstream of highly transcribed genes to help control overall chromosomal supercoiling density. E.coli makes 15% more negative supercoils in pBR322 plasmid DNA than S.typhimurium; the S.typhimurium GyrB subunit is toxic in E.coli, while the E.coli copy can be expressed in S.typhimurium even though the 2 subunits have 777/804 residues identical. In terms of biological role, negative supercoiling favors strand separation, and DNA replication, transcription, recombination and repair, all of which involve strand separation. Type II topoisomerases break and join 2 DNA strands simultaneously in an ATP-dependent manner. The protein is DNA gyrase subunit A of Salmonella typhimurium (strain LT2 / SGSC1412 / ATCC 700720).